Reading from the N-terminus, the 568-residue chain is Estrogen receptor beta-1 (568 aa).

The tract at residues 12–169 (SEYAEGDSSL…SLRGKADMHY (158 aa)) is modulating. NR C4-type zinc fingers lie at residues 170-190 (CAVC…CEGC) and 206-230 (CPAT…LRKC). Positions 170–235 (CAVCSDYASG…RLRKCYEVGM (66 aa)) form a DNA-binding region, nuclear receptor. Residues 292 to 528 (SPEELIARIM…DLLLEMLDAH (237 aa)) form the NR LBD domain.

This sequence belongs to the nuclear hormone receptor family. NR3 subfamily. As to quaternary structure, binds DNA as a homodimer. Can form a heterodimer with ER-alpha.

It is found in the nucleus. Its function is as follows. Binds estrogens with an affinity similar to that of ER-alpha, and activates expression of reporter genes containing estrogen response elements (ERE) in an estrogen-dependent manner. The protein is Estrogen receptor beta-1 (esr2a) of Carassius auratus (Goldfish).